A 199-amino-acid chain; its full sequence is Recombination protein RecR (199 aa).

The segment at 58–73 (CKTCGNIDTQSPCTVC) adopts a C4-type zinc-finger fold. The region spanning 81-176 (AMIVVVADVA…KVTRLAHGVP (96 aa)) is the Toprim domain.

The protein belongs to the RecR family.

May play a role in DNA repair. It seems to be involved in an RecBC-independent recombinational process of DNA repair. It may act with RecF and RecO. The chain is Recombination protein RecR from Bradyrhizobium sp. (strain BTAi1 / ATCC BAA-1182).